The sequence spans 265 residues: Tryptophan synthase alpha chain (265 aa).

Active-site proton acceptor residues include E48 and D59.

It belongs to the TrpA family. In terms of assembly, tetramer of two alpha and two beta chains.

It carries out the reaction (1S,2R)-1-C-(indol-3-yl)glycerol 3-phosphate + L-serine = D-glyceraldehyde 3-phosphate + L-tryptophan + H2O. The protein operates within amino-acid biosynthesis; L-tryptophan biosynthesis; L-tryptophan from chorismate: step 5/5. Functionally, the alpha subunit is responsible for the aldol cleavage of indoleglycerol phosphate to indole and glyceraldehyde 3-phosphate. The sequence is that of Tryptophan synthase alpha chain from Vesicomyosocius okutanii subsp. Calyptogena okutanii (strain HA).